We begin with the raw amino-acid sequence, 246 residues long: MPRPIGNLETTTDSGTGSAAFLFQPAHLVPFVQAWTWQRLWQERLLKGADSGGDPPPEAVWLLQHPPCYTLGRGASEDHLLFDPEHPPAPLHRIDRGGEVTHHAPGQLVIYPVLDLHRHRTDLHWYLRQLEQVVIDVLAALGLRGERIEGLTGVWLDQCKVAAIGVGCRRWITQHGVALNVNCALEGFESVVPCGLAGRAVGCLSDWCPGLHVSEVQPLVCDALAARFGLCLEPNADAAIAEGRCW.

The BPL/LPL catalytic domain maps to 54–240; that stretch reads DPPPEAVWLL…CLEPNADAAI (187 aa). Residues 96–103, 163–165, and 176–178 each bind substrate; these read RGGEVTHH, AIG, and GVA. Cysteine 194 functions as the Acyl-thioester intermediate in the catalytic mechanism.

It belongs to the LipB family.

It is found in the cytoplasm. The enzyme catalyses octanoyl-[ACP] + L-lysyl-[protein] = N(6)-octanoyl-L-lysyl-[protein] + holo-[ACP] + H(+). Its pathway is protein modification; protein lipoylation via endogenous pathway; protein N(6)-(lipoyl)lysine from octanoyl-[acyl-carrier-protein]: step 1/2. Catalyzes the transfer of endogenously produced octanoic acid from octanoyl-acyl-carrier-protein onto the lipoyl domains of lipoate-dependent enzymes. Lipoyl-ACP can also act as a substrate although octanoyl-ACP is likely to be the physiological substrate. The sequence is that of Octanoyltransferase from Synechococcus sp. (strain WH7803).